Consider the following 231-residue polypeptide: Coproheme decarboxylase (231 aa).

Residue lysine 44 forms an Isoglutamyl lysine isopeptide (Lys-Gln) (interchain with Q-Cter in protein Pup) linkage. Tyrosine 133 is a catalytic residue. Histidine 156 serves as a coordination point for Fe-coproporphyrin III.

This sequence belongs to the ChdC family. Type 2 subfamily. The cofactor is Fe-coproporphyrin III.

The catalysed reaction is Fe-coproporphyrin III + 2 H2O2 + 2 H(+) = heme b + 2 CO2 + 4 H2O. It catalyses the reaction Fe-coproporphyrin III + H2O2 + H(+) = harderoheme III + CO2 + 2 H2O. The enzyme catalyses harderoheme III + H2O2 + H(+) = heme b + CO2 + 2 H2O. It participates in porphyrin-containing compound metabolism; protoheme biosynthesis. Involved in coproporphyrin-dependent heme b biosynthesis. Catalyzes the decarboxylation of Fe-coproporphyrin III (coproheme) to heme b (protoheme IX), the last step of the pathway. The reaction occurs in a stepwise manner with a three-propionate intermediate. This is Coproheme decarboxylase from Mycolicibacterium smegmatis (strain ATCC 700084 / mc(2)155) (Mycobacterium smegmatis).